A 251-amino-acid chain; its full sequence is Guanine nucleotide-binding protein subunit gamma 3 (251 aa).

Over residues 1–10 the composition is skewed to gly residues; it reads MSAPSGGGEG. Residues 1–44 form a disordered region; it reads MSAPSGGGEGGGKESAAGGVSSSSLAPSSLPPPRPKSPPEYPDL. The span at 14-28 shows a compositional bias: low complexity; the sequence is ESAAGGVSSSSLAPS. Residues 29–41 are compositionally biased toward pro residues; sequence SLPPPRPKSPPEY. In terms of domain architecture, G protein gamma spans 46 to 126; sequence GKRREAARVQ…LSLVSFCCCC (81 aa). Position 248 is a cysteine methyl ester (C248). C248 carries the S-farnesyl cysteine lipid modification. Positions 249–251 are cleaved as a propeptide — removed in mature form; sequence LAF.

As to quaternary structure, g proteins are composed of 3 units, alpha, beta and gamma. As to expression, expressed in flowers and siliques.

Guanine nucleotide-binding proteins (G proteins) are involved as a modulator or transducer in various transmembrane signaling systems. The beta and gamma chains are required for the GTPase activity, for replacement of GDP by GTP, and for G protein-effector interaction. In Arabidopsis thaliana (Mouse-ear cress), this protein is Guanine nucleotide-binding protein subunit gamma 3 (GG3).